Here is a 469-residue protein sequence, read N- to C-terminus: MVHTASGREVRHGLEDDDADTICAMATPSGQGGVAVVRVSGSRALEVAEEVAGPLPAPREAGLRRFRDARGETLDHGLVLVFPGPGSYTGEDVVELQGHGSPAAVTAVLEALCAAGARPAGPGEFSERAFLNGRLDLTQAEAVASLIEAETDGARRAALRALSGAFGQRVDGLADRMIDLRALIEAFLDFPEDEDVPADPPELAAEIEALGSELAEIRRRAAAGVRFGEGIRVALVGPPNAGKSSLLNVLSGEEAAIVSAQAGTTRDVVRQWAALGSRHAELLDTAGLRDAEAQDEIEAEGARRARAAASEADLLLVVIEAGKTLDEELRARIAEQAPRPVVVIVNKIDASGDEAGWEGESEVGAHVRRARVSAHTGAGIEALRRGLAALVDREAGEDAWAARHRHIEALDRAGEELEEALVVARRGGQEELVAEALRRAQTALGEITGRVSHEALLGRIFSGFCIGKE.

The (6S)-5-formyl-5,6,7,8-tetrahydrofolate site is built by Arg38, Glu95, and Arg134. In terms of domain architecture, TrmE-type G spans 230–392 (GIRVALVGPP…LRRGLAALVD (163 aa)). GTP contacts are provided by residues 240–245 (NAGKSS), 259–265 (SAQAGTT), and 284–287 (DTAG). The Mg(2+) site is built by Ser244 and Thr265. Residue Lys468 participates in (6S)-5-formyl-5,6,7,8-tetrahydrofolate binding.

The protein belongs to the TRAFAC class TrmE-Era-EngA-EngB-Septin-like GTPase superfamily. TrmE GTPase family. Homodimer. Heterotetramer of two MnmE and two MnmG subunits. K(+) is required as a cofactor.

The protein localises to the cytoplasm. Exhibits a very high intrinsic GTPase hydrolysis rate. Involved in the addition of a carboxymethylaminomethyl (cmnm) group at the wobble position (U34) of certain tRNAs, forming tRNA-cmnm(5)s(2)U34. This chain is tRNA modification GTPase MnmE, found in Halorhodospira halophila (strain DSM 244 / SL1) (Ectothiorhodospira halophila (strain DSM 244 / SL1)).